A 644-amino-acid chain; its full sequence is Complement component C1q receptor (644 aa).

A signal peptide spans 1–22 (MAISTGLFLLLGLLGQPWAGAA). Residues 23–572 (ADSQAVVCEG…SAHSDTDGQN (550 aa)) lie on the Extracellular side of the membrane. The C-type lectin domain occupies 31–173 (EGTACYTAHW…CGTPEAPGNS (143 aa)). N-linked (GlcNAc...) asparagine glycosylation is present at N102. Intrachain disulfides connect C140/C164, C261/C272, C268/C282, C284/C297, C303/C314, C308/C325, C327/C340, C346/C355, C351/C364, C366/C380, C386/C397, C393/C406, C408/C422, C428/C440, C436/C449, and C451/C464. 2 consecutive EGF-like domains span residues 257 to 298 (PKFG…VTCA) and 299 to 341 (SRNP…VHCV). N322 carries N-linked (GlcNAc...) asparagine glycosylation. One can recognise an EGF-like 3; calcium-binding domain in the interval 342-381 (DIDECQDSPCAQDCVNTLGSFHCECWVGYQPSGPKEEACE). An EGF-like 4; calcium-binding domain is found at 382 to 423 (DVDECAAANSPCAQGCINTDGSFYCSCKEGYIVSGEDSTQCE). Positions 424 to 465 (DIDECSDARGNPCDSLCFNTDGSFRCGCPPGWELAPNGVFCS) constitute an EGF-like 5; calcium-binding domain. The tract at residues 473-508 (LPARPPQKEDNDDRKESTMPPTEMPSSPSGSKDVSN) is disordered. The segment covering 478 to 489 (PQKEDNDDRKES) has biased composition (basic and acidic residues). A compositionally biased stretch (low complexity) spans 490–501 (TMPPTEMPSSPS). The helical transmembrane segment at 573–593 (LLLFYILGTVVAISLLLVLAL) threads the bilayer. Topologically, residues 594 to 644 (GILIYHKRRAKKEEIKEKKPQNAADSYSWVPERAESQAPENQYSPTPGTDC) are cytoplasmic. The disordered stretch occupies residues 605–644 (KEEIKEKKPQNAADSYSWVPERAESQAPENQYSPTPGTDC). The residue at position 619 (S619) is a Phosphoserine. Residues Y620 and Y636 each carry the phosphotyrosine modification. Residues 631-644 (APENQYSPTPGTDC) are compositionally biased toward polar residues.

As to quaternary structure, homodimer. Interacts with C1QBP; the association may represent a cell surface C1q receptor. Interacts with surfactant protein A/SFTPA1. Interacts with multimerin-2/MMRN2. Interacts with DAG1; this interaction plays an important role in endothelial cell migration. Interacts with CBL. Interacts with IGFBP7. Interacts with VEGFR2. N- and O-glycosylated. In terms of processing, phosphorylated on Tyr-620 and Tyr-636 by SRC; these phosphorylations promote endothelial cell adhesion and migration. As to expression, expressed in lung, heart and bone marrow. Expressed at lower level in ovary, whole embryo and fetal liver. Not detected in brain, adult liver or thymus. Highly expressed in peritoneal cavity and bone marrow macrophages. Not detected in epithelial cells.

The protein resides in the cell membrane. Functionally, cell surface receptor that plays a role in various physiological processes including inflammation, phagocytosis, and cell adhesion. Plays a role in phagocytosis and enhances the uptake of apoptotic cells and immune complexes by acting as a receptor for defense collagens including surfactant protein A/SFTPA1, C1q, and mannose-binding lectin (MBL2). Plays a role in the regulation of endothelial cell function and adhesion by activating angiogenesis. Mechanistically, exerts its angiogenic function by associating with beta-dystroglycan, leading to SRC-dependent phosphorylation and subsequent recruitment of CBL. In turn, CBL provides a docking site for downstream signaling components, such as CRKL to enhance cell migration. Participates in angiogenesis also by acting as a receptor for the ECM pan-endothelial glycoprotein multimerin-2/MMRN2 and IGFBP7 ligands. Both ligands play a non-redundant role in CD93-mediated endothelial cell function. Acts as a key regulator of endothelial barrier function through modulating VEGFR2 function. This Mus musculus (Mouse) protein is Complement component C1q receptor (Cd93).